We begin with the raw amino-acid sequence, 366 residues long: MSAPLKRTPLAEEHLAAGARMVDFGGWDMPLAYGSQLEEHHAVRQDAGMFDVSHMLNVDVGGADATAFLRRLVANDVARLATPGKALYSCMLNPQGGIIDDLIIYYFAPDQWRVVVNAGTADKDIAWMQRVAAADGFDVAIAPRRDLAMVAVQGPNARAKVWAARPAWQAASEPLAPFSAAAVEAGTLVARTGYTGEDGFEIVLPADAVVQLWRDLLAQGVRPCGLGARDTLRLEAGMNLYGQDMDELVHPDQAGLSWTVALKDEARRFVGRDAIEQFAVPRAFVGLKLQERGVMRAHMPVRCAQGMGELTSGTMSPTLGVSVGFARVPVGVQPGDAVEVEIRGKWVPALVCKLPFVRHGKAVEHS.

This sequence belongs to the GcvT family. In terms of assembly, the glycine cleavage system is composed of four proteins: P, T, L and H.

It carries out the reaction N(6)-[(R)-S(8)-aminomethyldihydrolipoyl]-L-lysyl-[protein] + (6S)-5,6,7,8-tetrahydrofolate = N(6)-[(R)-dihydrolipoyl]-L-lysyl-[protein] + (6R)-5,10-methylene-5,6,7,8-tetrahydrofolate + NH4(+). The glycine cleavage system catalyzes the degradation of glycine. This Bordetella bronchiseptica (strain ATCC BAA-588 / NCTC 13252 / RB50) (Alcaligenes bronchisepticus) protein is Aminomethyltransferase.